The following is a 251-amino-acid chain: YlmG homolog protein 2, chloroplastic (251 aa).

A chloroplast-targeting transit peptide spans 1–51 (MEASANEPAMKSLKSNPSGPIPNFFVSLSSAFTQTPLVRSNKPNLLLLPPV). Helical transmembrane passes span 119 to 139 (GFAAVLPGDSVAGLVVANGLI) and 183 to 203 (FIPPLGGLDLSPILAFLVLNA). Residues 232-243 (VRRRRLSSHKDH) show a composition bias toward basic residues. A disordered region spans residues 232–251 (VRRRRLSSHKDHRPSSASMT).

The protein belongs to the YggT family.

It localises to the plastid. The protein resides in the chloroplast thylakoid membrane. Not required for the biogenesis and accumulation of native cytochrome b6 in the thylakoid membrane. Not functionally involved in the pathway for covalent binding of the c-type heme to cytochrome b6. The chain is YlmG homolog protein 2, chloroplastic from Arabidopsis thaliana (Mouse-ear cress).